A 407-amino-acid chain; its full sequence is MEIILGVVMFTLIVLALTVMILFAKSKLVNTGDITVEINEDEDKSFTAPAGDKLLNMLSSHGIFVSSACGGGGSCGQCRVTIKEGGGDILPTELSHISKREAKEGCRLACQVNVKQNLKIELPEEIFGVKKWTCEVISNDNKATFIKELKLKIPDGDVVPFRAGGFIQIEAEPHTVKYADFDVPTEYRGDWDKFNLFRFESVVTEPTVRAYSMANYPEEHGIILLNVRIATPPPSVPDAPPGIMSSYIWSLKPGDKVVISGPFGEFFAKDTDAEMVFIGGGAGMAPMRSHIFDQLKRLHSKRKISFWYGARSRREMFYEEDFDQLQAENDNFRWHVALSDPQPEDNWTGYTGFIHNVLLENYLKDHPAPEDCEFYMCGPPMMNAAVIKMLKDLGVEDENIMLDDFGG.

The chain crosses the membrane as a helical span at residues 3 to 23 (IILGVVMFTLIVLALTVMILF). The 95-residue stretch at 32 to 126 (GDITVEINED…NLKIELPEEI (95 aa)) folds into the 2Fe-2S ferredoxin-type domain. [2Fe-2S] cluster-binding residues include cysteine 69, cysteine 75, cysteine 78, and cysteine 110. One can recognise an FAD-binding FR-type domain in the interval 129–269 (VKKWTCEVIS…SGPFGEFFAK (141 aa)).

Belongs to the NqrF family. As to quaternary structure, composed of six subunits; NqrA, NqrB, NqrC, NqrD, NqrE and NqrF. [2Fe-2S] cluster serves as cofactor. FAD is required as a cofactor.

It localises to the cell inner membrane. The enzyme catalyses a ubiquinone + n Na(+)(in) + NADH + H(+) = a ubiquinol + n Na(+)(out) + NAD(+). Its function is as follows. NQR complex catalyzes the reduction of ubiquinone-1 to ubiquinol by two successive reactions, coupled with the transport of Na(+) ions from the cytoplasm to the periplasm. The first step is catalyzed by NqrF, which accepts electrons from NADH and reduces ubiquinone-1 to ubisemiquinone by a one-electron transfer pathway. The polypeptide is Na(+)-translocating NADH-quinone reductase subunit F (Yersinia pseudotuberculosis serotype O:1b (strain IP 31758)).